The sequence spans 215 residues: Ras-related protein Rab-42 (215 aa).

GTP contacts are provided by G19, G21, K22, T23, and T44. Mg(2+)-binding residues include T23, T44, and D68. 5 residues coordinate GTP: G71, K128, D130, A157, and K158. The interval 196–215 is disordered; it reads HRSPNPRSSSRKQDSGTCQC. S-geranylgeranyl cysteine attachment occurs at residues C213 and C215.

The protein belongs to the small GTPase superfamily. Rab family. The cofactor is Mg(2+).

Its subcellular location is the membrane. The catalysed reaction is GTP + H2O = GDP + phosphate + H(+). Regulated by guanine nucleotide exchange factors (GEFs) which promote the exchange of bound GDP for free GTP. Regulated by GTPase activating proteins (GAPs) which increase the GTP hydrolysis activity. Inhibited by GDP dissociation inhibitors (GDIs). In terms of biological role, the small GTPases Rab are key regulators of intracellular membrane trafficking, from the formation of transport vesicles to their fusion with membranes. Rabs cycle between an inactive GDP-bound form and an active GTP-bound form that is able to recruit to membranes different sets of downstream effectors directly responsible for vesicle formation, movement, tethering and fusion. The physiological function of RAB42 remains undefined. This Mus musculus (Mouse) protein is Ras-related protein Rab-42.